The sequence spans 360 residues: Actin-like protein MamK (360 aa).

ATP contacts are provided by residues lysine 22, 33–34, and aspartate 89; that span reads TS. Residue glutamate 156 participates in Mg(2+) binding. Residues 177-179, 231-235, and glycine 302 contribute to the ATP site; these read AGT and KEQFS.

Belongs to the FtsA/MreB family. MamK subfamily. As to quaternary structure, forms cytoplasmic filaments. Interacts with MamJ. Forms filaments in the absence of other magnetosome proteins and in E.coli. Filament formation in vitro requires ATP, GTP or a non-hydrolyzable ATP analog.

It is found in the cytoplasm. The protein localises to the cytoskeleton. The enzyme catalyses ATP + H2O = ADP + phosphate + H(+). Its activity is regulated as follows. Filament dynamics depend partially on MamJ. Functionally, protein with ATPase activity which forms dynamic cytoplasmic filaments that are involved in sorting, concatenating and/or correctly positioning of magnetosomes in the cell. Not absolutely necessary for assembly of short chains. Filaments grow from the both cell poles towards midcell, and are probably disassembled at the other end of the cell, a process known as treadmilling. Polymerizes in the presence of ATP, GTP or a non-hydrolyzable ATP analog. Required for correct segregation and positioning of magnetosomes following cell division. This is Actin-like protein MamK from Magnetospirillum gryphiswaldense (strain DSM 6361 / JCM 21280 / NBRC 15271 / MSR-1).